A 107-amino-acid polypeptide reads, in one-letter code: UPF0060 membrane protein RPB_2370 (107 aa).

Helical transmembrane passes span 5–25, 31–51, 61–81, and 85–105; these read IIYV…WGWL, VWWL…LTLV, AAYG…VEGV, and RWDV…LWGP.

This sequence belongs to the UPF0060 family.

It localises to the cell inner membrane. This is UPF0060 membrane protein RPB_2370 from Rhodopseudomonas palustris (strain HaA2).